Consider the following 94-residue polypeptide: Endoribonuclease VapD 2 (94 aa).

The protein belongs to the VapD ribonuclease family. Homodimer.

In terms of biological role, cleaves ssRNA, mostly between U:A. This Riemerella anatipestifer (Moraxella anatipestifer) protein is Endoribonuclease VapD 2.